The chain runs to 625 residues: RalA-binding protein 1 (625 aa).

Basic and acidic residues-rich tracts occupy residues 1-11 (MDFDSPEEKEF) and 20-60 (ADAK…KDRG). The disordered stretch occupies residues 1 to 172 (MDFDSPEEKE…SKQLSQQQDD (172 aa)). Residues S68 and S69 each carry the phosphoserine modification. Residues 94-157 (KSKEKREKSR…EKDKKADKKD (64 aa)) are compositionally biased toward basic and acidic residues. Residues 191 to 385 (VSLATERSRC…PLTSTSPKLP (195 aa)) enclose the Rho-GAP domain. Residues 443–500 (QEKTAEEVDNSSSAPPAVASEDTTDSKPAGTPAVSTNNSISQEEPKTDTLTPKDAPND) form a disordered region. A compositionally biased stretch (polar residues) spans 475-484 (AVSTNNSISQ).

Interacts with CycB and numb.

Participates in receptor endocytosis during interphase, is also involved in mitotic processes when endocytosis is switched off. The protein is RalA-binding protein 1 of Drosophila melanogaster (Fruit fly).